Reading from the N-terminus, the 398-residue chain is Enoyl-[acyl-carrier-protein] reductase [NADH] (398 aa).

Residues 48–53 (GASTGY), 74–75 (FE), 111–112 (DA), and 139–140 (LA) each bind NAD(+). Residue tyrosine 225 coordinates substrate. Tyrosine 235 (proton donor) is an active-site residue. NAD(+) contacts are provided by residues lysine 244 and 273–275 (VVT).

This sequence belongs to the TER reductase family. As to quaternary structure, monomer.

The enzyme catalyses a 2,3-saturated acyl-[ACP] + NAD(+) = a (2E)-enoyl-[ACP] + NADH + H(+). The protein operates within lipid metabolism; fatty acid biosynthesis. In terms of biological role, involved in the final reduction of the elongation cycle of fatty acid synthesis (FAS II). Catalyzes the reduction of a carbon-carbon double bond in an enoyl moiety that is covalently linked to an acyl carrier protein (ACP). In Pseudomonas fluorescens (strain ATCC BAA-477 / NRRL B-23932 / Pf-5), this protein is Enoyl-[acyl-carrier-protein] reductase [NADH].